Consider the following 438-residue polypeptide: uncharacterized protein (438 aa).

This is an uncharacterized protein from Methanocaldococcus jannaschii (strain ATCC 43067 / DSM 2661 / JAL-1 / JCM 10045 / NBRC 100440) (Methanococcus jannaschii).